A 66-amino-acid polypeptide reads, in one-letter code: MAKGKDVRIRVILECISCVRKGANEESTGISRYSTQKNRHNTPGQLEFKKFCRYCRKHTTHHEIKK.

The protein belongs to the bacterial ribosomal protein bL33 family.

The protein localises to the plastid. It localises to the chloroplast. In Agrostis stolonifera (Creeping bentgrass), this protein is Large ribosomal subunit protein bL33c.